Consider the following 294-residue polypeptide: Elongation factor Ts (294 aa).

Residues 79 to 82 (TDFV) form an involved in Mg(2+) ion dislocation from EF-Tu region.

It belongs to the EF-Ts family.

It is found in the cytoplasm. In terms of biological role, associates with the EF-Tu.GDP complex and induces the exchange of GDP to GTP. It remains bound to the aminoacyl-tRNA.EF-Tu.GTP complex up to the GTP hydrolysis stage on the ribosome. This chain is Elongation factor Ts (tsf), found in Geobacillus kaustophilus (strain HTA426).